A 188-amino-acid chain; its full sequence is Ribosome maturation factor RimP (188 aa).

Belongs to the RimP family.

It localises to the cytoplasm. Its function is as follows. Required for maturation of 30S ribosomal subunits. The sequence is that of Ribosome maturation factor RimP from Erythrobacter litoralis (strain HTCC2594).